A 131-amino-acid polypeptide reads, in one-letter code: Transcription antitermination protein NusB (131 aa).

The protein belongs to the NusB family.

Functionally, involved in transcription antitermination. Required for transcription of ribosomal RNA (rRNA) genes. Binds specifically to the boxA antiterminator sequence of the ribosomal RNA (rrn) operons. This is Transcription antitermination protein NusB from Campylobacter hominis (strain ATCC BAA-381 / DSM 21671 / CCUG 45161 / LMG 19568 / NCTC 13146 / CH001A).